The chain runs to 448 residues: Probable glycine dehydrogenase (decarboxylating) subunit 1 (448 aa).

This sequence belongs to the GcvP family. N-terminal subunit subfamily. The glycine cleavage system is composed of four proteins: P, T, L and H. In this organism, the P 'protein' is a heterodimer of two subunits.

It catalyses the reaction N(6)-[(R)-lipoyl]-L-lysyl-[glycine-cleavage complex H protein] + glycine + H(+) = N(6)-[(R)-S(8)-aminomethyldihydrolipoyl]-L-lysyl-[glycine-cleavage complex H protein] + CO2. The glycine cleavage system catalyzes the degradation of glycine. The P protein binds the alpha-amino group of glycine through its pyridoxal phosphate cofactor; CO(2) is released and the remaining methylamine moiety is then transferred to the lipoamide cofactor of the H protein. The polypeptide is Probable glycine dehydrogenase (decarboxylating) subunit 1 (Staphylococcus aureus (strain Mu3 / ATCC 700698)).